A 629-amino-acid polypeptide reads, in one-letter code: tRNA uridine 5-carboxymethylaminomethyl modification enzyme MnmG (629 aa).

FAD contacts are provided by residues 13 to 18 (GGGHAG), Val125, and Ser180. 273–287 (GPRYCPSIEDKVMRF) lines the NAD(+) pocket. Gln370 contacts FAD.

Belongs to the MnmG family. As to quaternary structure, homodimer. Heterotetramer of two MnmE and two MnmG subunits. It depends on FAD as a cofactor.

It is found in the cytoplasm. Functionally, NAD-binding protein involved in the addition of a carboxymethylaminomethyl (cmnm) group at the wobble position (U34) of certain tRNAs, forming tRNA-cmnm(5)s(2)U34. This chain is tRNA uridine 5-carboxymethylaminomethyl modification enzyme MnmG, found in Salmonella dublin (strain CT_02021853).